Here is a 332-residue protein sequence, read N- to C-terminus: MTRIAINGFGRIGRNVLRALLERDSDLDVVAVNDLTEPATLARLLAYDTTSGRLGRPVTVEGNVLVVDGRRITVTAEREPANLPWAELGVDIVLEATGRFTSAKAARAHLDAGAKKVLVSAPADGADITLAFGVNTDAYDPDLHTIVSNASCTTNALAPLAKVLDDLAGIEHGFMTTVHAYTQEQNLQDGPHRDPRRARAAAVNIVPTTTGAAKAIGLVLPNLDGKLSGDSIRVPVPVGSIVELNTTVARDVTRDEVLDAYRAAAQGPLAGVLEYSEDPLVSSDITGNPASSIFDSELTRVDGRHIKVVAWYDNEWGFSNRVIDTLQLLAAR.

Residues 11-12, Asp34, Arg78, and Ser120 contribute to the NAD(+) site; that span reads RI. D-glyceraldehyde 3-phosphate contacts are provided by residues 151 to 153, Thr182, Arg197, 210 to 211, and Arg233; these read SCT and TG. Catalysis depends on Cys152, which acts as the Nucleophile. Residue Asn314 participates in NAD(+) binding.

The protein belongs to the glyceraldehyde-3-phosphate dehydrogenase family. In terms of assembly, homotetramer.

Its subcellular location is the cytoplasm. It carries out the reaction D-glyceraldehyde 3-phosphate + phosphate + NAD(+) = (2R)-3-phospho-glyceroyl phosphate + NADH + H(+). It functions in the pathway carbohydrate degradation; glycolysis; pyruvate from D-glyceraldehyde 3-phosphate: step 1/5. Catalyzes the oxidative phosphorylation of glyceraldehyde 3-phosphate (G3P) to 1,3-bisphosphoglycerate (BPG) using the cofactor NAD. The first reaction step involves the formation of a hemiacetal intermediate between G3P and a cysteine residue, and this hemiacetal intermediate is then oxidized to a thioester, with concomitant reduction of NAD to NADH. The reduced NADH is then exchanged with the second NAD, and the thioester is attacked by a nucleophilic inorganic phosphate to produce BPG. This chain is Glyceraldehyde-3-phosphate dehydrogenase (gap), found in Kitasatospora aureofaciens (Streptomyces aureofaciens).